Here is a 140-residue protein sequence, read N- to C-terminus: Nucleoside diphosphate kinase (140 aa).

Positions 11, 59, 87, 93, 104, and 114 each coordinate ATP. The Pros-phosphohistidine intermediate role is filled by histidine 117.

This sequence belongs to the NDK family. As to quaternary structure, homotetramer. Mg(2+) serves as cofactor.

It is found in the cytoplasm. The catalysed reaction is a 2'-deoxyribonucleoside 5'-diphosphate + ATP = a 2'-deoxyribonucleoside 5'-triphosphate + ADP. It carries out the reaction a ribonucleoside 5'-diphosphate + ATP = a ribonucleoside 5'-triphosphate + ADP. In terms of biological role, major role in the synthesis of nucleoside triphosphates other than ATP. The ATP gamma phosphate is transferred to the NDP beta phosphate via a ping-pong mechanism, using a phosphorylated active-site intermediate. The chain is Nucleoside diphosphate kinase from Sphingopyxis alaskensis (strain DSM 13593 / LMG 18877 / RB2256) (Sphingomonas alaskensis).